Reading from the N-terminus, the 175-residue chain is ATP synthase subunit delta (175 aa).

The protein belongs to the ATPase delta chain family. In terms of assembly, F-type ATPases have 2 components, F(1) - the catalytic core - and F(0) - the membrane proton channel. F(1) has five subunits: alpha(3), beta(3), gamma(1), delta(1), epsilon(1). F(0) has three main subunits: a(1), b(2) and c(10-14). The alpha and beta chains form an alternating ring which encloses part of the gamma chain. F(1) is attached to F(0) by a central stalk formed by the gamma and epsilon chains, while a peripheral stalk is formed by the delta and b chains.

It is found in the cell inner membrane. Functionally, f(1)F(0) ATP synthase produces ATP from ADP in the presence of a proton or sodium gradient. F-type ATPases consist of two structural domains, F(1) containing the extramembraneous catalytic core and F(0) containing the membrane proton channel, linked together by a central stalk and a peripheral stalk. During catalysis, ATP synthesis in the catalytic domain of F(1) is coupled via a rotary mechanism of the central stalk subunits to proton translocation. In terms of biological role, this protein is part of the stalk that links CF(0) to CF(1). It either transmits conformational changes from CF(0) to CF(1) or is implicated in proton conduction. The protein is ATP synthase subunit delta of Xanthomonas oryzae pv. oryzae (strain MAFF 311018).